The sequence spans 100 residues: Integration host factor subunit alpha (100 aa).

This sequence belongs to the bacterial histone-like protein family. Heterodimer of an alpha and a beta chain.

In terms of biological role, this protein is one of the two subunits of integration host factor, a specific DNA-binding protein that functions in genetic recombination as well as in transcriptional and translational control. This chain is Integration host factor subunit alpha, found in Cereibacter sphaeroides (strain ATCC 17023 / DSM 158 / JCM 6121 / CCUG 31486 / LMG 2827 / NBRC 12203 / NCIMB 8253 / ATH 2.4.1.) (Rhodobacter sphaeroides).